We begin with the raw amino-acid sequence, 394 residues long: Na(+)/H(+) antiporter NhaA (394 aa).

Transmembrane regions (helical) follow at residues I17 to V37, L59 to V79, S95 to F115, V124 to L144, V154 to F174, T177 to L197, F213 to I233, F261 to L281, P287 to F307, I328 to L348, and L363 to V383.

The protein belongs to the NhaA Na(+)/H(+) (TC 2.A.33) antiporter family.

Its subcellular location is the cell inner membrane. The enzyme catalyses Na(+)(in) + 2 H(+)(out) = Na(+)(out) + 2 H(+)(in). Functionally, na(+)/H(+) antiporter that extrudes sodium in exchange for external protons. This chain is Na(+)/H(+) antiporter NhaA, found in Shewanella frigidimarina (strain NCIMB 400).